Here is a 314-residue protein sequence, read N- to C-terminus: Endo-beta-N-acetylglucosaminidase (314 aa).

A signal peptide spans 1–47 (MQFGIVAAIADGGRTARAGGSVRPPRRPPASHTAWGLPRGRPTGQPH). Positions 14–54 (RTARAGGSVRPPRRPPASHTAWGLPRGRPTGQPHATPTKSG) are disordered. Positions 55–309 (PTSIAYVEVN…SSMTKVLYGQ (255 aa)) constitute a GH18 domain. The active-site Proton donor is the Glu-175.

It belongs to the glycosyl hydrolase 18 family. In terms of assembly, monomer.

Its subcellular location is the secreted. It catalyses the reaction an N(4)-(oligosaccharide-(1-&gt;3)-[oligosaccharide-(1-&gt;6)]-beta-D-Man-(1-&gt;4)-beta-D-GlcNAc-(1-&gt;4)-alpha-D-GlcNAc)-L-asparaginyl-[protein] + H2O = an oligosaccharide-(1-&gt;3)-[oligosaccharide-(1-&gt;6)]-beta-D-Man-(1-&gt;4)-D-GlcNAc + N(4)-(N-acetyl-beta-D-glucosaminyl)-L-asparaginyl-[protein]. Its function is as follows. Cleaves asparagine-linked oligomannose and hybrid, but not complex, oligosaccharides from glycoproteins. In Flavobacterium sp. (strain SK1022), this protein is Endo-beta-N-acetylglucosaminidase.